The primary structure comprises 158 residues: Putative peptidoglycan-binding-like protein (158 aa).

An N-terminal signal peptide occupies residues 1–24; the sequence is MRSPKVKFLTIFTFCIFITKMSFA.

This sequence belongs to the IagB/IpgF/P19 family.

The protein resides in the periplasm. This chain is Putative peptidoglycan-binding-like protein (pbl), found in Escherichia coli (strain K12).